A 91-amino-acid polypeptide reads, in one-letter code: Probable Fe(2+)-trafficking protein (91 aa).

The protein belongs to the Fe(2+)-trafficking protein family.

Its function is as follows. Could be a mediator in iron transactions between iron acquisition and iron-requiring processes, such as synthesis and/or repair of Fe-S clusters in biosynthetic enzymes. The chain is Probable Fe(2+)-trafficking protein from Burkholderia ambifaria (strain MC40-6).